Reading from the N-terminus, the 602-residue chain is MDEVDDILINNQVVDDEEDDEEMLSGLENDSKQDLEGNDDGGEDEEDDDDDDEDDDDDEDEREDDDEQEDDDGEDDAARMDKTATPTNEHQHDEQKAAAAGAGGAGDSGDAVTKIGSEDVKLSDVDGGVGSREASSSTHEASANGEVYEYYKHMLNAAQIADSYNIYPTAAIPIQTHVNALAVSRGLKYLFLGGSDGYIRKYDLLNTLEGKLSLTILQKHSLAESIQNAGILQSYWENEIPQKKSEMKLSANKTDYEPKVSPVHSLEVQSECLFILSGLQNGGITMQGVRYMEGSIAHYFKGRNGHTQIVNILRLNGQEDRFLSGSWDKRLLEWDLQTGDIVNEFKKSRSELSSLEMRPLYSSVDVSGNVNSGKENENADDDMDSLFGDEDEDEKQDAGNEPVETGDGSNGEENKEQISEESLNIVYDESVFMTSGLNGSVHIWDRRMTQSPALSLERGAGVPPWCLSACWGVDGDHVYAGRRNACVEQFDLKMPSKPIHNLKLPSISGPVSCVKAMPNNKHLLCASRDNIRLYNVEIAVDASNSTTKSSKVPFLIVPGHHGGIISNLYLDPTSRFIISTSGNRGWQGNSTDTTLIYDIDLE.

The disordered stretch occupies residues 1–141 (MDEVDDILIN…REASSSTHEA (141 aa)). Acidic residues-rich tracts occupy residues 14 to 23 (VDDEEDDEEM) and 36 to 75 (EGNDDGGEDEEDDDDDDEDDDDDEDEREDDDEQEDDDGED). The residue at position 85 (threonine 85) is a Phosphothreonine. 3 positions are modified to phosphoserine: serine 108, serine 123, and serine 131. 2 WD repeats span residues 173–212 (PIQTHVNALAVSRGLKYLFLGGSDGYIRKYDLLNTLEGKL) and 305–346 (GHTQ…NEFK). The segment at 366–418 (VSGNVNSGKENENADDDMDSLFGDEDEDEKQDAGNEPVETGDGSNGEENKEQI) is disordered. Residues 378-395 (NADDDMDSLFGDEDEDEK) are compositionally biased toward acidic residues. WD repeat units lie at residues 415–454 (KEQISEESLNIVYDESVFMTSGLNGSVHIWDRRMTQSPAL), 506–544 (SISGPVSCVKAMPNNKHLLCASRDNIRLYNVEIAVDASN), and 560–600 (HHGG…YDID). Position 451 is a phosphoserine (serine 451).

This sequence belongs to the WD repeat SPT8 family. Component of the 1.8 MDa SAGA (Spt-Ada-Gcn5 acetyltransferase) complex, which is composed of 19 subunits TRA1, SPT7, TAF5, NGG1/ADA3, SGF73, SPT20/ADA5, SPT8, TAF12, TAF6, HFI1/ADA1, UBP8, GCN5, ADA2, SPT3, SGF29, TAF10, TAF9, SGF11 and SUS1. The SAGA complex is composed of 4 modules, namely the HAT (histone acetyltransferase) module (GCN5, ADA2, NGG1/ADA3 and SGF29), the DUB (deubiquitinating) module (UBP8, SGF11, SGF73 and SUS1), the core or TAF (TBP-associated factor) module (TAF5, TAF6, TAF9, TAF10 and TAF12), and the Tra1 or SPT (Suppressor of Ty) module (TRA1, HFI1/ADA1, SPT3, SPT7, SPT8 and SPT20/ADA5). The Tra1/SPT module binds activators, the core module recruits TBP (TATA-binding protein), the HAT module contains the histone H3 acetyltransferase GCN5, and the DUB module comprises the histone H2B deubiquitinase UBP8.

It localises to the nucleus. Functionally, component of the transcription coactivator SAGA complex. SAGA acts as a general cofactor required for essentially all RNA polymerase II transcription. At the promoters, SAGA is required for transcription pre-initiation complex (PIC) recruitment. It influences RNA polymerase II transcriptional activity through different activities such as TBP interaction (via core/TAF module) and promoter selectivity, interaction with transcription activators (via Tra1/SPT module), and chromatin modification through histone acetylation (via HAT module) and deubiquitination (via DUB module). SAGA preferentially acetylates histones H3 (to form H3K9ac, H3K14ac, H3K18ac and H3K23ac) and H2B and deubiquitinates histone H2B. SAGA interacts with DNA via upstream activating sequences (UASs). During SAGA-mediated transcriptional inhibition, SPT3 and SPT8 prevent binding of TBP to the TATA box. This is SAGA complex subunit SPT8 (SPT8) from Saccharomyces cerevisiae (strain ATCC 204508 / S288c) (Baker's yeast).